Consider the following 66-residue polypeptide: uncharacterized protein (66 aa).

This is an uncharacterized protein from Archaeoglobus fulgidus (strain ATCC 49558 / DSM 4304 / JCM 9628 / NBRC 100126 / VC-16).